Consider the following 1381-residue polypeptide: Hepatocyte growth factor receptor (1381 aa).

The first 24 residues, 1-24, serve as a signal peptide directing secretion; the sequence is MKAPAVLAPGILVLLFTLVQRSNG. Residues 25 to 934 lie on the Extracellular side of the membrane; it reads ECKEALTKSE…VQPDQNFTGL (910 aa). A Sema domain is found at 27–515; that stretch reads KEALTKSEMN…TGKKITKIPL (489 aa). Asparagine 45 carries an N-linked (GlcNAc...) asparagine glycan. 4 cysteine pairs are disulfide-bonded: cysteine 95–cysteine 101, cysteine 98–cysteine 160, cysteine 133–cysteine 141, and cysteine 172–cysteine 175. N-linked (GlcNAc...) asparagine glycosylation occurs at asparagine 106. Asparagine 149 is a glycosylation site (N-linked (GlcNAc...) asparagine). Asparagine 202 carries N-linked (GlcNAc...) asparagine glycosylation. 2 disulfides stabilise this stretch: cysteine 298-cysteine 363 and cysteine 385-cysteine 397. Asparagine 399 is a glycosylation site (N-linked (GlcNAc...) asparagine). Intrachain disulfides connect cysteine 520-cysteine 538, cysteine 526-cysteine 561, cysteine 529-cysteine 545, and cysteine 541-cysteine 551. 3 IPT/TIG domains span residues 563 to 655, 657 to 739, and 742 to 836; these read PTIY…FSYV, PIIT…FSYR, and PIVY…LIYV. Threonine 582 is a glycosylation site (O-linked (Man) threonine). Residues asparagine 607 and asparagine 635 are each glycosylated (N-linked (GlcNAc...) asparagine). 2 O-linked (Man) threonine glycosylation sites follow: threonine 676 and threonine 761. N-linked (GlcNAc...) asparagine glycosylation is found at asparagine 785, asparagine 879, and asparagine 930. Residues 935–955 traverse the membrane as a helical segment; it reads VAGVVSISIALLLLLGLFLWL. Residues 956–1381 lie on the Cytoplasmic side of the membrane; it reads KKKKQIKDLG…QDNTDGEVDT (426 aa). Serine 966 is subject to Phosphoserine. Threonine 977 carries the phosphothreonine modification. Residues serine 990, serine 997, and serine 1000 each carry the phosphoserine modification. Phosphotyrosine is present on tyrosine 1003. The region spanning 1078–1345 is the Protein kinase domain; the sequence is VHFNEVIGRG…RISAIFSTFI (268 aa). ATP is bound by residues 1084–1092 and lysine 1110; that span reads IGRGHFGCV. The active-site Proton acceptor is the aspartate 1204. An interaction with RANBP9 region spans residues 1212–1381; it reads LDEKFTVKVA…QDNTDGEVDT (170 aa). Tyrosine 1230 bears the Phosphotyrosine mark. Residues tyrosine 1234 and tyrosine 1235 each carry the phosphotyrosine; by autocatalysis modification. Threonine 1289 carries the phosphothreonine modification. The tract at residues 1320–1359 is interaction with MUC20; that stretch reads WHPKAEMRPSFSELVSRISAIFSTFIGEHYVHVNATYVNV. A phosphotyrosine; by autocatalysis mark is found at tyrosine 1349 and tyrosine 1356. Residue tyrosine 1365 is modified to Phosphotyrosine.

It belongs to the protein kinase superfamily. Tyr protein kinase family. Heterodimer made of an alpha chain (50 kDa) and a beta chain (145 kDa) which are disulfide linked. Binds PLXNB1. Interacts when phosphorylated with downstream effectors including STAT3, PIK3R1, SRC, PCLG1, GRB2 and GAB1. Interacts with SPSB1, SPSB2 and SPSB4. Interacts with INPP5D/SHIP1. When phosphorylated at Tyr-1356, interacts with INPPL1/SHIP2. Interacts with RANBP9 and RANBP10, as well as SPSB1, SPSB2, SPSB3 and SPSB4. SPSB1 binding occurs in the presence and in the absence of HGF, however HGF treatment has a positive effect on this interaction. Interacts with MUC20; prevents interaction with GRB2 and suppresses hepatocyte growth factor-induced cell proliferation. Interacts with GRB10. Interacts with PTPN1 and PTPN2. Interacts with HSP90AA1 and HSP90AB1; the interaction suppresses MET kinase activity. Interacts with tensin TNS3. Interacts (when phosphorylated) with tensin TNS4 (via SH2 domain); the interaction increases MET protein stability by inhibiting MET endocytosis and subsequent lysosomal degradation. In terms of processing, autophosphorylated in response to ligand binding on Tyr-1234 and Tyr-1235 in the kinase domain leading to further phosphorylation of Tyr-1349 and Tyr-1356 in the C-terminal multifunctional docking site. Dephosphorylated by PTPRJ at Tyr-1349 and Tyr-1365. Dephosphorylated by PTPN1 and PTPN2. Ubiquitinated. Ubiquitination by CBL regulates the receptor stability and activity through proteasomal degradation. Post-translationally, O-mannosylation of IPT/TIG domains by TMEM260 is required for protein maturation. O-mannosylated residues are composed of single mannose glycans that are not elongated or modified.

It localises to the membrane. The enzyme catalyses L-tyrosyl-[protein] + ATP = O-phospho-L-tyrosyl-[protein] + ADP + H(+). In terms of biological role, receptor tyrosine kinase that transduces signals from the extracellular matrix into the cytoplasm by binding to hepatocyte growth factor/HGF ligand. Regulates many physiological processes including proliferation, scattering, morphogenesis and survival. Ligand binding at the cell surface induces autophosphorylation of MET on its intracellular domain that provides docking sites for downstream signaling molecules. Following activation by ligand, interacts with the PI3-kinase subunit PIK3R1, PLCG1, SRC, GRB2, STAT3 or the adapter GAB1. Recruitment of these downstream effectors by MET leads to the activation of several signaling cascades including the RAS-ERK, PI3 kinase-AKT, or PLCgamma-PKC. The RAS-ERK activation is associated with the morphogenetic effects while PI3K/AKT coordinates prosurvival effects. During embryonic development, MET signaling plays a role in gastrulation, development and migration of muscles and neuronal precursors, angiogenesis and kidney formation. In adults, participates in wound healing as well as organ regeneration and tissue remodeling. Also promotes differentiation and proliferation of hematopoietic cells. The chain is Hepatocyte growth factor receptor (MET) from Callithrix jacchus (White-tufted-ear marmoset).